The following is a 282-amino-acid chain: Undecaprenyl-diphosphatase (282 aa).

The next 7 helical transmembrane spans lie at 40-60, 85-105, 117-137, 158-178, 193-213, 231-251, and 258-278; these read GAAFTAIVQIGTLIAVLIYFF, AKMGWMIAAGTIPIVVFGLLF, YWISAALITLAIILSLAEWLI, ALIIGLVQSIALIPGSSRSGV, AARFSFLLSLPAVFAAGIYQL, IVATLVAGIVGYASIAFLITF, and AVFIIYRIALGLTILALIATG.

The protein belongs to the UppP family.

Its subcellular location is the cell inner membrane. The catalysed reaction is di-trans,octa-cis-undecaprenyl diphosphate + H2O = di-trans,octa-cis-undecaprenyl phosphate + phosphate + H(+). Functionally, catalyzes the dephosphorylation of undecaprenyl diphosphate (UPP). Confers resistance to bacitracin. In Prosthecochloris aestuarii (strain DSM 271 / SK 413), this protein is Undecaprenyl-diphosphatase.